The chain runs to 598 residues: Aspartate--tRNA(Asp/Asn) ligase (598 aa).

An L-aspartate-binding site is contributed by Glu-177. Residues 201–204 (QLFK) form an aspartate region. Residue Arg-223 participates in L-aspartate binding. ATP-binding positions include 223-225 (RDE) and Gln-232. L-aspartate is bound at residue His-456. Residue Glu-493 participates in ATP binding. L-aspartate is bound at residue Arg-500. 545 to 548 (GLDR) is a binding site for ATP.

The protein belongs to the class-II aminoacyl-tRNA synthetase family. Type 1 subfamily. Homodimer.

Its subcellular location is the cytoplasm. It carries out the reaction tRNA(Asx) + L-aspartate + ATP = L-aspartyl-tRNA(Asx) + AMP + diphosphate. Functionally, aspartyl-tRNA synthetase with relaxed tRNA specificity since it is able to aspartylate not only its cognate tRNA(Asp) but also tRNA(Asn). Reaction proceeds in two steps: L-aspartate is first activated by ATP to form Asp-AMP and then transferred to the acceptor end of tRNA(Asp/Asn). This Prochlorococcus marinus (strain AS9601) protein is Aspartate--tRNA(Asp/Asn) ligase.